Here is a 103-residue protein sequence, read N- to C-terminus: MAKISKALRTIPIAFIKVYQWFISPLLGPRCRFYPSCSHYACEAIQKHGTIRGIGLAAVRISKCHPAHEGGYDPVPLAKQDAKPENNSESESLLNQPTETKSL.

Residues 68 to 103 (HEGGYDPVPLAKQDAKPENNSESESLLNQPTETKSL) form a disordered region. A compositionally biased stretch (polar residues) spans 87 to 103 (NSESESLLNQPTETKSL).

It belongs to the UPF0161 family.

The protein resides in the cell inner membrane. Could be involved in insertion of integral membrane proteins into the membrane. The polypeptide is Putative membrane protein insertion efficiency factor (Idiomarina loihiensis (strain ATCC BAA-735 / DSM 15497 / L2-TR)).